We begin with the raw amino-acid sequence, 200 residues long: Recombination protein RecR (200 aa).

The C4-type zinc-finger motif lies at 59–74 (CDICGNVCETSPCPVC). One can recognise a Toprim domain in the interval 82–177 (SVICVVEEPK…KVTRLASGLP (96 aa)).

Belongs to the RecR family.

Its function is as follows. May play a role in DNA repair. It seems to be involved in an RecBC-independent recombinational process of DNA repair. It may act with RecF and RecO. The sequence is that of Recombination protein RecR from Bifidobacterium adolescentis (strain ATCC 15703 / DSM 20083 / NCTC 11814 / E194a).